A 205-amino-acid polypeptide reads, in one-letter code: Large ribosomal subunit protein uL13 (205 aa).

It belongs to the universal ribosomal protein uL13 family.

This is Large ribosomal subunit protein uL13 (RpL13A) from Drosophila melanogaster (Fruit fly).